An 840-amino-acid chain; its full sequence is Heat shock 70 kDa protein 4 (840 aa).

Lys-53 carries the N6-acetyllysine modification. Ser-76 bears the Phosphoserine mark. Phosphotyrosine is present on residues Tyr-89 and Tyr-336. Phosphoserine is present on residues Ser-393 and Ser-415. The residue at position 430 (Lys-430) is an N6-acetyllysine. A disordered region spans residues 500–575; it reads VHKSEENEEP…QAKKAKVKTS (76 aa). Residues 514–533 are compositionally biased toward basic and acidic residues; the sequence is QNAKEEEKMQVDQEEPHVEE. A Phosphothreonine modification is found at Thr-538. Phosphoserine occurs at positions 546 and 647. Tyr-660 carries the post-translational modification Phosphotyrosine. The residue at position 679 (Lys-679) is an N6-acetyllysine. Ser-756 is modified (phosphoserine). Lys-773 bears the N6-methyllysine mark. The disordered stretch occupies residues 779 to 840; the sequence is CSPIISKPKP…DKKLPEMDID (62 aa). Composition is skewed to basic and acidic residues over residues 788 to 799 and 829 to 840; these read PKVEPPKEEQKN and DSDKKLPEMDID.

The protein belongs to the heat shock protein 70 family. Interacts with TJP1/ZO-1.

Its subcellular location is the cytoplasm. This chain is Heat shock 70 kDa protein 4 (HSPA4), found in Homo sapiens (Human).